A 376-amino-acid chain; its full sequence is Chaperone protein DnaJ (376 aa).

In terms of domain architecture, J spans 5 to 70 (DYYEILGVSK…QKRAAYDQYG (66 aa)). A CR-type zinc finger spans residues 131–209 (GVTKEIRIPT…CHGHGRVERS (79 aa)). Zn(2+) is bound by residues Cys-144, Cys-147, Cys-161, Cys-164, Cys-183, Cys-186, Cys-197, and Cys-200. CXXCXGXG motif repeat units lie at residues 144–151 (CDVCHGSG), 161–168 (CPTCHGSG), 183–190 (CPHCQGRG), and 197–204 (CNKCHGHG).

Belongs to the DnaJ family. As to quaternary structure, homodimer. Zn(2+) is required as a cofactor.

It is found in the cytoplasm. Its function is as follows. Participates actively in the response to hyperosmotic and heat shock by preventing the aggregation of stress-denatured proteins and by disaggregating proteins, also in an autonomous, DnaK-independent fashion. Unfolded proteins bind initially to DnaJ; upon interaction with the DnaJ-bound protein, DnaK hydrolyzes its bound ATP, resulting in the formation of a stable complex. GrpE releases ADP from DnaK; ATP binding to DnaK triggers the release of the substrate protein, thus completing the reaction cycle. Several rounds of ATP-dependent interactions between DnaJ, DnaK and GrpE are required for fully efficient folding. Also involved, together with DnaK and GrpE, in the DNA replication of plasmids through activation of initiation proteins. The chain is Chaperone protein DnaJ from Escherichia coli O157:H7 (strain EC4115 / EHEC).